The sequence spans 474 residues: tRNA-2-methylthio-N(6)-dimethylallyladenosine synthase (474 aa).

One can recognise an MTTase N-terminal domain in the interval 3 to 120 (KKLLIKTWGC…LPEMIKQSQS (118 aa)). C12, C49, C83, C157, C161, and C164 together coordinate [4Fe-4S] cluster. The region spanning 143–375 (RAEGATAFVS…QQQINAQAMR (233 aa)) is the Radical SAM core domain. In terms of domain architecture, TRAM spans 378–441 (RLMLGTEQRV…ANSLRGEIVR (64 aa)).

The protein belongs to the methylthiotransferase family. MiaB subfamily. As to quaternary structure, monomer. The cofactor is [4Fe-4S] cluster.

It localises to the cytoplasm. It carries out the reaction N(6)-dimethylallyladenosine(37) in tRNA + (sulfur carrier)-SH + AH2 + 2 S-adenosyl-L-methionine = 2-methylsulfanyl-N(6)-dimethylallyladenosine(37) in tRNA + (sulfur carrier)-H + 5'-deoxyadenosine + L-methionine + A + S-adenosyl-L-homocysteine + 2 H(+). In terms of biological role, catalyzes the methylthiolation of N6-(dimethylallyl)adenosine (i(6)A), leading to the formation of 2-methylthio-N6-(dimethylallyl)adenosine (ms(2)i(6)A) at position 37 in tRNAs that read codons beginning with uridine. This Vibrio vulnificus (strain YJ016) protein is tRNA-2-methylthio-N(6)-dimethylallyladenosine synthase.